The following is a 469-amino-acid chain: Bile acid receptor (469 aa).

Lys119 participates in a covalent cross-link: Glycyl lysine isopeptide (Lys-Gly) (interchain with G-Cter in SUMO1). A DNA-binding region (nuclear receptor) is located at residues 121–196 (DELCVVCGDR…MGMLAECLLT (76 aa)). Residues 124-144 (CVVCGDRASGYHYNALTCEGC) form an NR C4-type zinc finger. Phosphoserine; by PKC/PRKCA occurs at positions 132 and 151. The residue at position 154 (Lys154) is an N6-acetyllysine; by EP300. The segment at 160–184 (CKNGGNCVMDMYMRRKCQDCRLRKC) adopts an NR C4-type zinc-finger fold. The residue at position 203 (Lys203) is an N6-methyllysine; by SETD7. Lys210 bears the N6-acetyllysine; by EP300 mark. Residues 245-469 (DQQTLLDYIM…PLLCEIWDVQ (225 aa)) enclose the NR LBD domain. A Glycyl lysine isopeptide (Lys-Gly) (interchain with G-Cter in SUMO1) cross-link involves residue Lys272. Residue Arg328 participates in 3beta,7beta-dihydroxy-5beta-cholan-24-oate binding. 3 residues coordinate chenodeoxycholate: Arg328, Tyr358, and Tyr366. Tyr366 is a 3beta,7beta-dihydroxy-5beta-cholan-24-oate binding site. Thr439 is subject to Phosphothreonine; by PKC/PRKCZ. His444 serves as a coordination point for chenodeoxycholate.

Belongs to the nuclear hormone receptor family. NR1 subfamily. As to quaternary structure, heterodimer with RXRA; the heterodimerization enhances the binding affinity for LXXLL motifs from coactivators. Binds DNA predominantly as a heterodimer with RXRA. After activation by agonist binding interacts with coactivators. Interacts with NCOA1, NCOA2, PPARGC1A, CARM1, SETD7, PRMT1, GPS2, SMARCA4 and MED1, EP300 and SMARCD1. Interacts with XRCC5 and XRCC6; decreasing NR1H4/FXR transactivation activity towards ABCB11/BSEP. Interacts with PAGR1 AND NCOA6; indicative for an association with an MLL2/MLL3 complex (ASCOM). Acetylated by EP300. Lys-210 as is the major acetylation site for EP300; the dynamicly regulated acetylation inhibits heterodimerization with RXRA and transactivation activity. Deacetylated by SIRT1. Post-translationally, methylation may increase transactivation of target genes. In terms of processing, phosphorylation by PKC/PRKCA increases transactivation activity by promoting association with PPARGC1A. Sumoylated upon ligand binding.

It is found in the nucleus. Ligand-activated transcription factor. Receptor for bile acids (BAs) such as chenodeoxycholic acid (CDCA), lithocholic acid, deoxycholic acid (DCA) and allocholic acid (ACA). Plays a essential role in BA homeostasis through the regulation of genes involved in BA synthesis, conjugation and enterohepatic circulation. Also regulates lipid and glucose homeostasis and is involved innate immune response. The FXR-RXR heterodimer binds predominantly to farnesoid X receptor response elements (FXREs) containing two inverted repeats of the consensus sequence 5'-AGGTCA-3' in which the monomers are spaced by 1 nucleotide (IR-1) but also to tandem repeat DR1 sites with lower affinity, and can be activated by either FXR or RXR-specific ligands. It is proposed that monomeric nuclear receptors such as NR5A2/LRH-1 bound to coregulatory nuclear responsive element (NRE) halfsites located in close proximity to FXREs modulate transcriptional activity. In the liver activates transcription of the corepressor NR0B2 thereby indirectly inhibiting CYP7A1 and CYP8B1 (involved in BA synthesis) implicating at least in part histone demethylase KDM1A resulting in epigenomic repression, and SLC10A1/NTCP (involved in hepatic uptake of conjugated BAs). Activates transcription of the repressor MAFG (involved in regulation of BA synthesis). Activates transcription of SLC27A5/BACS and BAAT (involved in BA conjugation), ABCB11/BSEP (involved in bile salt export) by directly recruiting histone methyltransferase CARM1, and ABCC2/MRP2 (involved in secretion of conjugated BAs) and ABCB4 (involved in secretion of phosphatidylcholine in the small intestine). Activates transcription of SLC27A5/BACS and BAAT (involved in BA conjugation), ABCB11/BSEP (involved in bile salt export) by directly recruiting histone methyltransferase CARM1, and ABCC2/MRP2 (involved in secretion of conjugated BAs) and ABCB4 (involved in secretion of phosphatidylcholine in the small intestine). In the intestine activates FGF19 expression and secretion leading to hepatic CYP7A1 repression. The function also involves the coordinated induction of hepatic KLB/beta-klotho expression. Regulates transcription of liver UGT2B4 and SULT2A1 involved in BA detoxification; binding to the UGT2B4 promoter seems to imply a monomeric transactivation independent of RXRA. Modulates lipid homeostasis by activating liver NR0B2/SHP-mediated repression of SREBF1 (involved in de novo lipogenesis), expression of PLTP (involved in HDL formation), SCARB1 (involved in HDL hepatic uptake), APOE, APOC1, APOC4, PPARA (involved in beta-oxidation of fatty acids), VLDLR and SDC1 (involved in the hepatic uptake of LDL and IDL remnants), and inhibiting expression of MTTP (involved in VLDL assembly). Increases expression of APOC2 (promoting lipoprotein lipase activity implicated in triglyceride clearance). Transrepresses APOA1 involving a monomeric competition with NR2A1 for binding to a DR1 element. Also reduces triglyceride clearance by inhibiting expression of ANGPTL3 and APOC3 (both involved in inhibition of lipoprotein lipase). Involved in glucose homeostasis by modulating hepatic gluconeogenesis through activation of NR0B2/SHP-mediated repression of respective genes. Modulates glycogen synthesis (inducing phosphorylation of glycogen synthase kinase-3). Modulates glucose-stimulated insulin secretion and is involved in insulin resistance. Involved in intestinal innate immunity. Plays a role in protecting the distal small intestine against bacterial overgrowth and preservation of the epithelial barrier. Down-regulates inflammatory cytokine expression in several types of immune cells including macrophages and mononuclear cells. Mediates trans-repression of TLR4-induced cytokine expression; the function seems to require its sumoylation and prevents N-CoR nuclear receptor corepressor clearance from target genes such as IL1B and NOS2. Involved in the TLR9-mediated protective mechanism in intestinal inflammation. Plays an anti-inflammatory role in liver inflammation; proposed to inhibit pro-inflammatory (but not antiapoptotic) NF-kappa-B signaling. This chain is Bile acid receptor (Nr1h4), found in Rattus norvegicus (Rat).